Reading from the N-terminus, the 519-residue chain is Ribonuclease Y (519 aa).

The chain crosses the membrane as a helical span at residues 3-23; the sequence is LLSLLLILLGIILGVVVGYIV. A KH domain is found at 209–269; that stretch reads TVSVVNLPND…IRREIARTAL (61 aa). Residues 335-428 enclose the HD domain; it reads VLKHSIEVAH…VAAADALSAA (94 aa).

This sequence belongs to the RNase Y family.

The protein resides in the cell membrane. Endoribonuclease that initiates mRNA decay. In Staphylococcus epidermidis (strain ATCC 35984 / DSM 28319 / BCRC 17069 / CCUG 31568 / BM 3577 / RP62A), this protein is Ribonuclease Y.